Consider the following 470-residue polypeptide: Uronate isomerase (470 aa).

The protein belongs to the metallo-dependent hydrolases superfamily. Uronate isomerase family.

The enzyme catalyses D-glucuronate = D-fructuronate. The catalysed reaction is aldehydo-D-galacturonate = keto-D-tagaturonate. Its pathway is carbohydrate metabolism; pentose and glucuronate interconversion. The sequence is that of Uronate isomerase from Escherichia coli O17:K52:H18 (strain UMN026 / ExPEC).